The sequence spans 436 residues: Methylenetetrahydrofolate--tRNA-(uracil-5-)-methyltransferase TrmFO (436 aa).

10 to 15 serves as a coordination point for FAD; that stretch reads GAGLAG.

This sequence belongs to the MnmG family. TrmFO subfamily. The cofactor is FAD.

It is found in the cytoplasm. The enzyme catalyses uridine(54) in tRNA + (6R)-5,10-methylene-5,6,7,8-tetrahydrofolate + NADH + H(+) = 5-methyluridine(54) in tRNA + (6S)-5,6,7,8-tetrahydrofolate + NAD(+). It catalyses the reaction uridine(54) in tRNA + (6R)-5,10-methylene-5,6,7,8-tetrahydrofolate + NADPH + H(+) = 5-methyluridine(54) in tRNA + (6S)-5,6,7,8-tetrahydrofolate + NADP(+). In terms of biological role, catalyzes the folate-dependent formation of 5-methyl-uridine at position 54 (M-5-U54) in all tRNAs. This is Methylenetetrahydrofolate--tRNA-(uracil-5-)-methyltransferase TrmFO from Staphylococcus carnosus (strain TM300).